The chain runs to 695 residues: uncharacterized protein (695 aa).

Disordered regions lie at residues 1–112 (MSRL…KHKK) and 242–262 (MKKV…NNDH). Low complexity predominate over residues 32–47 (DSSSSSDSPNFFPSSS). Residues 96-107 (KTEKEKEKEPIQ) are compositionally biased toward basic and acidic residues. Residues 278 to 492 (KPRTKLLLLG…KIDKEADTNH (215 aa)) form the tr-type G domain. GTP is bound by residues 287 to 294 (GPPKSGKK), 357 to 361 (IFTTN), and 417 to 420 (TKMD).

Belongs to the TRAFAC class translation factor GTPase superfamily. Classic translation factor GTPase family.

It localises to the cytoplasm. The protein localises to the nucleus. This is an uncharacterized protein from Schizosaccharomyces pombe (strain 972 / ATCC 24843) (Fission yeast).